Here is a 236-residue protein sequence, read N- to C-terminus: Leucyl/phenylalanyl-tRNA--protein transferase (236 aa).

This sequence belongs to the L/F-transferase family.

It localises to the cytoplasm. The catalysed reaction is N-terminal L-lysyl-[protein] + L-leucyl-tRNA(Leu) = N-terminal L-leucyl-L-lysyl-[protein] + tRNA(Leu) + H(+). It carries out the reaction N-terminal L-arginyl-[protein] + L-leucyl-tRNA(Leu) = N-terminal L-leucyl-L-arginyl-[protein] + tRNA(Leu) + H(+). It catalyses the reaction L-phenylalanyl-tRNA(Phe) + an N-terminal L-alpha-aminoacyl-[protein] = an N-terminal L-phenylalanyl-L-alpha-aminoacyl-[protein] + tRNA(Phe). In terms of biological role, functions in the N-end rule pathway of protein degradation where it conjugates Leu, Phe and, less efficiently, Met from aminoacyl-tRNAs to the N-termini of proteins containing an N-terminal arginine or lysine. This Aliivibrio salmonicida (strain LFI1238) (Vibrio salmonicida (strain LFI1238)) protein is Leucyl/phenylalanyl-tRNA--protein transferase.